We begin with the raw amino-acid sequence, 294 residues long: MSDYLVKALAYDGMARVYAAVTTETIKEAQRRHDTWSVSSAALGRTMTGTLFLGAMQKEDQKITVKIEGDGPIGPIVADSNAQGQIRGYVTNPHVHFSELNEAGKLDVRRGVGTSGMLSVVKDLGFGENFTGQTPIISGEIGEDFTYYLATSEQINSSVGVGVLVNPDDTIEAAGGFMLQLLPGATDEIIDEIEKNLTALPTVSRMIEAGETPESILAKLAGGEDKLQILEKIPVSFECNCSKERFGSAIISLGKEEIRSMIEEDHGAEAECHFCRNAYDFSEEELEKLYDEAK.

Disulfide bonds link C239/C241 and C272/C275.

This sequence belongs to the HSP33 family. Under oxidizing conditions two disulfide bonds are formed involving the reactive cysteines. Under reducing conditions zinc is bound to the reactive cysteines and the protein is inactive.

It localises to the cytoplasm. In terms of biological role, redox regulated molecular chaperone. Protects both thermally unfolding and oxidatively damaged proteins from irreversible aggregation. Plays an important role in the bacterial defense system toward oxidative stress. The chain is 33 kDa chaperonin from Listeria monocytogenes serotype 4b (strain CLIP80459).